Here is a 170-residue protein sequence, read N- to C-terminus: Ureidoglycolate lyase (170 aa).

This sequence belongs to the ureidoglycolate lyase family. As to quaternary structure, homodimer. The cofactor is Ni(2+).

It catalyses the reaction (S)-ureidoglycolate = urea + glyoxylate. It functions in the pathway nitrogen metabolism; (S)-allantoin degradation. Functionally, catalyzes the catabolism of the allantoin degradation intermediate (S)-ureidoglycolate, generating urea and glyoxylate. Involved in the utilization of allantoin as nitrogen source. In Pseudomonas syringae pv. syringae (strain B728a), this protein is Ureidoglycolate lyase.